The chain runs to 313 residues: 4-diphosphocytidyl-2-C-methyl-D-erythritol kinase (313 aa).

Residue Lys-11 is part of the active site. Residue 99 to 109 (PVAAGLAGGST) participates in ATP binding. The active site involves Asp-141.

The protein belongs to the GHMP kinase family. IspE subfamily.

The catalysed reaction is 4-CDP-2-C-methyl-D-erythritol + ATP = 4-CDP-2-C-methyl-D-erythritol 2-phosphate + ADP + H(+). The protein operates within isoprenoid biosynthesis; isopentenyl diphosphate biosynthesis via DXP pathway; isopentenyl diphosphate from 1-deoxy-D-xylulose 5-phosphate: step 3/6. Its function is as follows. Catalyzes the phosphorylation of the position 2 hydroxy group of 4-diphosphocytidyl-2C-methyl-D-erythritol. This chain is 4-diphosphocytidyl-2-C-methyl-D-erythritol kinase, found in Microcystis aeruginosa (strain NIES-843 / IAM M-2473).